Reading from the N-terminus, the 525-residue chain is GMP synthase [glutamine-hydrolyzing] (525 aa).

A Glutamine amidotransferase type-1 domain is found at 7–207 (RILVIDFGSQ…ITCICRCKSS (201 aa)). The Nucleophile role is filled by cysteine 84. Catalysis depends on residues histidine 181 and glutamate 183. The 193-residue stretch at 208–400 (WKIANIIDDI…LGIPYDIAYR (193 aa)) folds into the GMPS ATP-PPase domain. 235 to 241 (SGGIDSL) contributes to the ATP binding site.

In terms of assembly, homodimer.

The enzyme catalyses XMP + L-glutamine + ATP + H2O = GMP + L-glutamate + AMP + diphosphate + 2 H(+). Its pathway is purine metabolism; GMP biosynthesis; GMP from XMP (L-Gln route): step 1/1. In terms of biological role, catalyzes the synthesis of GMP from XMP. This is GMP synthase [glutamine-hydrolyzing] from Blochmanniella pennsylvanica (strain BPEN).